The primary structure comprises 180 residues: PRA1 family protein F1 (180 aa).

4 helical membrane passes run 63–83, 84–104, 123–143, and 145–165; these read ANTV…VFLS, LIWN…WLFL, IVLI…DAKL, and IAVA…VRKT.

It belongs to the PRA1 family. As to quaternary structure, interacts with PRA1F2. Expressed in hypocotyls, leaf bases and shoot apex.

It is found in the endosome membrane. In terms of biological role, may be involved in both secretory and endocytic intracellular trafficking in the endosomal/prevacuolar compartments. This Arabidopsis thaliana (Mouse-ear cress) protein is PRA1 family protein F1 (PRA1F1).